The primary structure comprises 74 residues: Translation initiation factor IF-1 (74 aa).

The S1-like domain maps to 1 to 72 (MAKQDAIEME…TKGRITYRLR (72 aa)).

The protein belongs to the IF-1 family. In terms of assembly, component of the 30S ribosomal translation pre-initiation complex which assembles on the 30S ribosome in the order IF-2 and IF-3, IF-1 and N-formylmethionyl-tRNA(fMet); mRNA recruitment can occur at any time during PIC assembly.

It localises to the cytoplasm. Its function is as follows. One of the essential components for the initiation of protein synthesis. Stabilizes the binding of IF-2 and IF-3 on the 30S subunit to which N-formylmethionyl-tRNA(fMet) subsequently binds. Helps modulate mRNA selection, yielding the 30S pre-initiation complex (PIC). Upon addition of the 50S ribosomal subunit IF-1, IF-2 and IF-3 are released leaving the mature 70S translation initiation complex. The sequence is that of Translation initiation factor IF-1 from Acaryochloris marina (strain MBIC 11017).